Reading from the N-terminus, the 200-residue chain is Isochorismatase family protein 2A (200 aa).

The protein belongs to the isochorismatase family.

The protein is Isochorismatase family protein 2A of Dictyostelium discoideum (Social amoeba).